A 559-amino-acid polypeptide reads, in one-letter code: Probable 2-ketoarginine decarboxylase AruI (559 aa).

E76 provides a ligand contact to thiamine diphosphate.

It belongs to the TPP enzyme family. Thiamine diphosphate is required as a cofactor.

The catalysed reaction is 5-guanidino-2-oxopentanoate + H(+) = 4-guanidinobutanal + CO2. Its pathway is amino-acid degradation; L-arginine degradation. Catalyzes the decarboxylation of 2-ketoarginine, leading to the formation of 4-guanidinobutyraldehyde. This chain is Probable 2-ketoarginine decarboxylase AruI (aruI), found in Pseudomonas aeruginosa (strain ATCC 15692 / DSM 22644 / CIP 104116 / JCM 14847 / LMG 12228 / 1C / PRS 101 / PAO1).